Consider the following 371-residue polypeptide: Anhydro-N-acetylmuramic acid kinase (371 aa).

Position 12-20 (12-20 (GTVLDGNID)) interacts with ATP.

The protein belongs to the anhydro-N-acetylmuramic acid kinase family.

The catalysed reaction is 1,6-anhydro-N-acetyl-beta-muramate + ATP + H2O = N-acetyl-D-muramate 6-phosphate + ADP + H(+). It participates in amino-sugar metabolism; 1,6-anhydro-N-acetylmuramate degradation. The protein operates within cell wall biogenesis; peptidoglycan recycling. Functionally, catalyzes the specific phosphorylation of 1,6-anhydro-N-acetylmuramic acid (anhMurNAc) with the simultaneous cleavage of the 1,6-anhydro ring, generating MurNAc-6-P. Is required for the utilization of anhMurNAc either imported from the medium or derived from its own cell wall murein, and thus plays a role in cell wall recycling. This chain is Anhydro-N-acetylmuramic acid kinase, found in Rhizobium rhizogenes (strain K84 / ATCC BAA-868) (Agrobacterium radiobacter).